A 397-amino-acid chain; its full sequence is uncharacterized protein (397 aa).

Residues 368 to 391 (TTKPGLHQPTQKRPTQTTSKPYIN) are disordered. Positions 375 to 388 (QPTQKRPTQTTSKP) are enriched in polar residues.

This is an uncharacterized protein from Acanthamoeba polyphaga mimivirus (APMV).